We begin with the raw amino-acid sequence, 418 residues long: Light-independent protochlorophyllide reductase subunit N (418 aa).

[4Fe-4S] cluster contacts are provided by Cys17, Cys42, and Cys103.

It belongs to the BchN/ChlN family. In terms of assembly, protochlorophyllide reductase is composed of three subunits; ChlL, ChlN and ChlB. Forms a heterotetramer of two ChlB and two ChlN subunits. The cofactor is [4Fe-4S] cluster.

It carries out the reaction chlorophyllide a + oxidized 2[4Fe-4S]-[ferredoxin] + 2 ADP + 2 phosphate = protochlorophyllide a + reduced 2[4Fe-4S]-[ferredoxin] + 2 ATP + 2 H2O. The protein operates within porphyrin-containing compound metabolism; chlorophyll biosynthesis (light-independent). Its function is as follows. Component of the dark-operative protochlorophyllide reductase (DPOR) that uses Mg-ATP and reduced ferredoxin to reduce ring D of protochlorophyllide (Pchlide) to form chlorophyllide a (Chlide). This reaction is light-independent. The NB-protein (ChlN-ChlB) is the catalytic component of the complex. This is Light-independent protochlorophyllide reductase subunit N from Prochlorococcus marinus (strain MIT 9211).